The following is a 267-amino-acid chain: Ubiquinone biosynthesis protein COQ4 homolog, mitochondrial (267 aa).

Zn(2+) contacts are provided by His170, Asp171, His174, and Glu186.

The protein belongs to the COQ4 family. In terms of assembly, component of a multi-subunit COQ enzyme complex. It depends on Zn(2+) as a cofactor.

It is found in the mitochondrion inner membrane. It carries out the reaction a 4-hydroxy-3-methoxy-5-(all-trans-polyprenyl)benzoate + H(+) = a 2-methoxy-6-(all-trans-polyprenyl)phenol + CO2. It functions in the pathway cofactor biosynthesis; ubiquinone biosynthesis. In terms of biological role, lyase that catalyzes the C1-decarboxylation of 4-hydroxy-3-methoxy-5-(all-trans-polyprenyl)benzoic acid into 2-methoxy-6-(all-trans-polyprenyl)phenol during ubiquinone biosynthesis. This chain is Ubiquinone biosynthesis protein COQ4 homolog, mitochondrial, found in Drosophila pseudoobscura pseudoobscura (Fruit fly).